Reading from the N-terminus, the 331-residue chain is (+)-aristolochene synthase TS1 (331 aa).

The segment at Met-1–Gly-22 is disordered. Residues Ser-7–Gly-16 show a composition bias toward low complexity. Mg(2+)-binding residues include Asp-102, Asn-231, Ser-235, and Glu-239. The DDxx(x)D/E motif signature appears at Asp-102–Glu-106. The NDxxSxxxD/E motif signature appears at Asn-231–Glu-239. 2 residues coordinate (2E,6E)-farnesyl diphosphate: Arg-326 and Tyr-327.

This sequence belongs to the terpene synthase family. As to quaternary structure, homodimer. Mg(2+) is required as a cofactor.

It carries out the reaction (2E,6E)-farnesyl diphosphate = (+)-aristolochene + diphosphate. The protein operates within sesquiterpene biosynthesis; aristolochene biosynthesis; aristolochene from farnesyl diphosphate: step 1/1. Catalyzes the cyclization of trans,trans-farnesyl diphosphate (FPP) to the bicyclic sesquiterpene aristolochene. Aristolochene is the likely parent compound for a number of sesquiterpenoid toxins produced by filamentous fungi. This chain is (+)-aristolochene synthase TS1, found in Penicillium expansum (Blue mold rot fungus).